The chain runs to 360 residues: Aminomethyltransferase (360 aa).

The protein belongs to the GcvT family. The glycine cleavage system is composed of four proteins: P, T, L and H.

It catalyses the reaction N(6)-[(R)-S(8)-aminomethyldihydrolipoyl]-L-lysyl-[protein] + (6S)-5,6,7,8-tetrahydrofolate = N(6)-[(R)-dihydrolipoyl]-L-lysyl-[protein] + (6R)-5,10-methylene-5,6,7,8-tetrahydrofolate + NH4(+). Its function is as follows. The glycine cleavage system catalyzes the degradation of glycine. This is Aminomethyltransferase from Legionella pneumophila subsp. pneumophila (strain Philadelphia 1 / ATCC 33152 / DSM 7513).